Here is a 595-residue protein sequence, read N- to C-terminus: Actin-histidine N-methyltransferase (595 aa).

A disordered region spans residues 1 to 22; the sequence is MGKKSRVKTQKSGTGATATVSP. Polar residues predominate over residues 10 to 20; it reads QKSGTGATATV. S-adenosyl-L-methionine is bound by residues R75, 104–106, R254, 275–279, and 325–327; these read EGF, DMCNH, and SGF. In terms of domain architecture, SET spans 94–314; it reads EGFEMVNFKE…AGEQIYIFYG (221 aa). Phosphoserine is present on S513. Positions 552–595 are disordered; that stretch reads LVNGENCIPNGTRSENEDLNQEENKRAVEDAKGSSSDSTDAVKK. Residues 573–583 are compositionally biased toward basic and acidic residues; that stretch reads EENKRAVEDAK. Residues 584–595 are compositionally biased toward polar residues; sequence GSSSDSTDAVKK.

It belongs to the class V-like SAM-binding methyltransferase superfamily. SETD3 actin-histidine methyltransferase family. In terms of assembly, interacts with MYOD1. Phosphorylated by GSK3B, which is required for recognition by the SCF(FBXW7) complex and subsequent degradation. Post-translationally, ubiquitinated by the SCF(FBXW7) complex following phosphorylation by GSK3B, leading to its degradation by the proteasome.

The protein localises to the cytoplasm. It is found in the nucleus. It catalyses the reaction L-histidyl-[protein] + S-adenosyl-L-methionine = N(tele)-methyl-L-histidyl-[protein] + S-adenosyl-L-homocysteine + H(+). Protein-histidine N-methyltransferase that specifically mediates 3-methylhistidine (tele-methylhistidine) methylation of actin at 'His-73'. Histidine methylation of actin is required for smooth muscle contraction of the laboring uterus during delivery. Does not have protein-lysine N-methyltransferase activity and probably only catalyzes histidine methylation of actin. This Otolemur garnettii (Small-eared galago) protein is Actin-histidine N-methyltransferase.